Consider the following 355-residue polypeptide: Heat-inducible transcription repressor HrcA (355 aa).

The protein belongs to the HrcA family.

Functionally, negative regulator of class I heat shock genes (grpE-dnaK-dnaJ and groELS operons). Prevents heat-shock induction of these operons. This is Heat-inducible transcription repressor HrcA from Nitratidesulfovibrio vulgaris (strain ATCC 29579 / DSM 644 / CCUG 34227 / NCIMB 8303 / VKM B-1760 / Hildenborough) (Desulfovibrio vulgaris).